We begin with the raw amino-acid sequence, 548 residues long: Natural resistance-associated macrophage protein 1 (548 aa).

A disordered region spans residues 1 to 38 (MSGDTGPPKQGGTRYGSISSPPSPEPQQAPPGGTYLSE). At 1–55 (MSGDTGPPKQGGTRYGSISSPPSPEPQQAPPGGTYLSEKIPIPDTESGTFSLRKL) the chain is on the cytoplasmic side. Residues 56 to 73 (WAFTGPGFLMSIAFLDPG) form a helical membrane-spanning segment. Over 74–82 (NIESDLQAG) the chain is Extracellular. A helical membrane pass occupies residues 83–102 (AVAGFKLLWVLLWATVLGLL). Residues 103–139 (CQRLAARLGVVTGKDLGEVCHLYYPKVPRILLWLTIE) are Cytoplasmic-facing. The helical transmembrane segment at 140–160 (LAIVGSDMQEVIGTAIAFSLL) threads the bilayer. Residues 161–164 (SAGR) lie on the Extracellular side of the membrane. Residues 165–184 (IPLWGGVLITIVDAFFFLFL) form a helical membrane-spanning segment. Over 185-193 (DNYGLRKLE) the chain is Cytoplasmic. The chain crosses the membrane as a helical span at residues 194–214 (AFFGFLITIMALTFGYEYVVA). The Extracellular portion of the chain corresponds to 215 to 237 (QPAQGALLQGLFLPSCPGCGQPE). Residues 238 to 256 (LLQAVGIIGAIIMPHNIYL) form a helical membrane-spanning segment. The Cytoplasmic segment spans residues 257 to 284 (HSSLVKSREVDRSRRADIREANMYFLIE). A helical membrane pass occupies residues 285-304 (ATIALSVSFLINLFVMAVFG). The Extracellular portion of the chain corresponds to 305-346 (QAFYKQTNQAAFNICANSSLQDYAPIFPRNNLTVAVDIYQGG). 2 N-linked (GlcNAc...) asparagine glycosylation sites follow: asparagine 321 and asparagine 335. Residues 347-366 (VILGCLFGPAALYIWAVGLL) form a helical membrane-spanning segment. The Cytoplasmic segment spans residues 367–397 (AAGQSSTMTGTYAGQFVMEGFLKLRWSRFAR). Residues 398–415 (VLLTRSCAILPTVLLAVF) traverse the membrane as a helical segment. At 416–426 (RDLRDLSGLND) the chain is on the extracellular side. Residues 427-447 (LLNVLQSLLLPFAVLPILTFT) form a helical membrane-spanning segment. The Cytoplasmic segment spans residues 448 to 463 (SMPALMREFANGLVSK). A helical transmembrane segment spans residues 464–485 (VITSSIMVLVCAVNLYFVISYV). Residues 486-493 (PSLPHPAY) lie on the Extracellular side of the membrane. A helical transmembrane segment spans residues 494–513 (FSLVALLAAAYLGLTTYLVW). The Cytoplasmic segment spans residues 514 to 548 (TCLITQGATLLAHSSHQRFLYGLPEEDQEKGRTSG).

The protein belongs to the NRAMP family.

It is found in the late endosome membrane. It localises to the lysosome membrane. It catalyses the reaction Zn(2+)(in) + H(+)(out) = Zn(2+)(out) + H(+)(in). The enzyme catalyses Fe(2+)(in) + H(+)(out) = Fe(2+)(out) + H(+)(in). The catalysed reaction is Mn(2+)(in) + H(+)(out) = Mn(2+)(out) + H(+)(in). In terms of biological role, macrophage-specific antiporter that fluxes metal ions in either direction against a proton gradient. Localized to late endosomal lysosomal membranes, delivers bivalent cations from the cytosol into these acidic compartments where they may directly affect antimicrobial activity. Involved in iron metabolism and host natural resistance to infection with intracellular parasites. Pathogen resistance involves sequestration of Fe(2+) and Mn(2+), cofactors of both prokaryotic and eukaryotic catalases and superoxide dismutases, not only to protect the macrophage against its own generation of reactive oxygen species, but to deny the cations to the pathogen for synthesis of its protective enzymes. The chain is Natural resistance-associated macrophage protein 1 (SLC11A1) from Bison bison (American bison).